The sequence spans 87 residues: Glutaredoxin (87 aa).

The Glutaredoxin domain maps to 1–87 (MFKVYGYDSN…GFDQLREYFK (87 aa)). C14 and C17 are oxidised to a cystine.

The protein belongs to the glutaredoxin family.

In terms of biological role, serves as a reducing agent for the phage-induced ribonucleotide reductase, but not for the bacterial ones. This specificity may be the result of sequence differences around the redox-active disulfide bond. The oxidized form accepts electrons from bacterial glutathione and will, in turn, reduce other small disulfides. Can also be reduced by NADPH and by bacterial thioredoxin reductase. This is Glutaredoxin (NRDC) from Enterobacteria phage T4 (Bacteriophage T4).